We begin with the raw amino-acid sequence, 317 residues long: Aspartate carbamoyltransferase catalytic subunit (317 aa).

Carbamoyl phosphate contacts are provided by Arg-55 and Thr-56. Residue Lys-83 participates in L-aspartate binding. 3 residues coordinate carbamoyl phosphate: Arg-105, His-138, and Gln-141. Residues Arg-171 and Arg-225 each contribute to the L-aspartate site. Carbamoyl phosphate contacts are provided by Gly-266 and Pro-267.

This sequence belongs to the aspartate/ornithine carbamoyltransferase superfamily. ATCase family. In terms of assembly, heterododecamer (2C3:3R2) of six catalytic PyrB chains organized as two trimers (C3), and six regulatory PyrI chains organized as three dimers (R2).

The enzyme catalyses carbamoyl phosphate + L-aspartate = N-carbamoyl-L-aspartate + phosphate + H(+). Its pathway is pyrimidine metabolism; UMP biosynthesis via de novo pathway; (S)-dihydroorotate from bicarbonate: step 2/3. Functionally, catalyzes the condensation of carbamoyl phosphate and aspartate to form carbamoyl aspartate and inorganic phosphate, the committed step in the de novo pyrimidine nucleotide biosynthesis pathway. The polypeptide is Aspartate carbamoyltransferase catalytic subunit (Mycobacteroides abscessus (strain ATCC 19977 / DSM 44196 / CCUG 20993 / CIP 104536 / JCM 13569 / NCTC 13031 / TMC 1543 / L948) (Mycobacterium abscessus)).